A 302-amino-acid polypeptide reads, in one-letter code: Sulfate adenylyltransferase subunit 2 (302 aa).

The interval 280-302 (RQGRAIDHDQSGSMELKKRQGYF) is disordered.

The protein belongs to the PAPS reductase family. CysD subfamily. As to quaternary structure, heterodimer composed of CysD, the smaller subunit, and CysN.

The catalysed reaction is sulfate + ATP + H(+) = adenosine 5'-phosphosulfate + diphosphate. The protein operates within sulfur metabolism; hydrogen sulfide biosynthesis; sulfite from sulfate: step 1/3. Its function is as follows. With CysN forms the ATP sulfurylase (ATPS) that catalyzes the adenylation of sulfate producing adenosine 5'-phosphosulfate (APS) and diphosphate, the first enzymatic step in sulfur assimilation pathway. APS synthesis involves the formation of a high-energy phosphoric-sulfuric acid anhydride bond driven by GTP hydrolysis by CysN coupled to ATP hydrolysis by CysD. The protein is Sulfate adenylyltransferase subunit 2 of Vibrio parahaemolyticus serotype O3:K6 (strain RIMD 2210633).